Here is a 569-residue protein sequence, read N- to C-terminus: Proline--tRNA ligase (569 aa).

It belongs to the class-II aminoacyl-tRNA synthetase family. ProS type 1 subfamily. In terms of assembly, homodimer.

The protein resides in the cytoplasm. The enzyme catalyses tRNA(Pro) + L-proline + ATP = L-prolyl-tRNA(Pro) + AMP + diphosphate. Its function is as follows. Catalyzes the attachment of proline to tRNA(Pro) in a two-step reaction: proline is first activated by ATP to form Pro-AMP and then transferred to the acceptor end of tRNA(Pro). As ProRS can inadvertently accommodate and process non-cognate amino acids such as alanine and cysteine, to avoid such errors it has two additional distinct editing activities against alanine. One activity is designated as 'pretransfer' editing and involves the tRNA(Pro)-independent hydrolysis of activated Ala-AMP. The other activity is designated 'posttransfer' editing and involves deacylation of mischarged Ala-tRNA(Pro). The misacylated Cys-tRNA(Pro) is not edited by ProRS. In Shewanella woodyi (strain ATCC 51908 / MS32), this protein is Proline--tRNA ligase.